Consider the following 126-residue polypeptide: Small ribosomal subunit protein uS13 (126 aa).

Positions 91–126 (RHRRGLPVRGQRTSTNARTRKGPRRAIAGKKKPGKK) are disordered. Basic residues predominate over residues 108 to 126 (RTRKGPRRAIAGKKKPGKK).

This sequence belongs to the universal ribosomal protein uS13 family. As to quaternary structure, part of the 30S ribosomal subunit. Forms a loose heterodimer with protein S19. Forms two bridges to the 50S subunit in the 70S ribosome.

Located at the top of the head of the 30S subunit, it contacts several helices of the 16S rRNA. In the 70S ribosome it contacts the 23S rRNA (bridge B1a) and protein L5 of the 50S subunit (bridge B1b), connecting the 2 subunits; these bridges are implicated in subunit movement. Contacts the tRNAs in the A and P-sites. The chain is Small ribosomal subunit protein uS13 from Streptomyces coelicolor (strain ATCC BAA-471 / A3(2) / M145).